The chain runs to 159 residues: NADH-quinone oxidoreductase subunit B (159 aa).

The [4Fe-4S] cluster site is built by cysteine 36, cysteine 37, cysteine 102, and cysteine 132.

Belongs to the complex I 20 kDa subunit family. As to quaternary structure, NDH-1 is composed of 14 different subunits. Subunits NuoB, C, D, E, F, and G constitute the peripheral sector of the complex. It depends on [4Fe-4S] cluster as a cofactor.

The protein localises to the cell inner membrane. It catalyses the reaction a quinone + NADH + 5 H(+)(in) = a quinol + NAD(+) + 4 H(+)(out). NDH-1 shuttles electrons from NADH, via FMN and iron-sulfur (Fe-S) centers, to quinones in the respiratory chain. The immediate electron acceptor for the enzyme in this species is believed to be ubiquinone. Couples the redox reaction to proton translocation (for every two electrons transferred, four hydrogen ions are translocated across the cytoplasmic membrane), and thus conserves the redox energy in a proton gradient. The sequence is that of NADH-quinone oxidoreductase subunit B from Acidovorax ebreus (strain TPSY) (Diaphorobacter sp. (strain TPSY)).